The primary structure comprises 413 residues: Coiled-coil domain-containing protein 83 (413 aa).

Coiled-coil stretches lie at residues H32–R186 and I215–N255.

This chain is Coiled-coil domain-containing protein 83 (CCDC83), found in Bos taurus (Bovine).